Here is a 106-residue protein sequence, read N- to C-terminus: UPF0145 protein CLH_2273 (106 aa).

This sequence belongs to the UPF0145 family.

The sequence is that of UPF0145 protein CLH_2273 from Clostridium botulinum (strain Alaska E43 / Type E3).